Here is a 466-residue protein sequence, read N- to C-terminus: UDP-N-acetylmuramoylalanine--D-glutamate ligase (466 aa).

Residue glycine 117 to threonine 123 coordinates ATP.

This sequence belongs to the MurCDEF family.

The protein resides in the cytoplasm. It carries out the reaction UDP-N-acetyl-alpha-D-muramoyl-L-alanine + D-glutamate + ATP = UDP-N-acetyl-alpha-D-muramoyl-L-alanyl-D-glutamate + ADP + phosphate + H(+). It participates in cell wall biogenesis; peptidoglycan biosynthesis. Cell wall formation. Catalyzes the addition of glutamate to the nucleotide precursor UDP-N-acetylmuramoyl-L-alanine (UMA). The protein is UDP-N-acetylmuramoylalanine--D-glutamate ligase of Roseiflexus sp. (strain RS-1).